Here is a 75-residue protein sequence, read N- to C-terminus: Mitotic-spindle organizing protein 1 (75 aa).

This sequence belongs to the MOZART1 family. In terms of assembly, part of the gamma-tubulin complex.

The protein resides in the cytoplasm. It localises to the cytoskeleton. Its subcellular location is the microtubule organizing center. The protein localises to the centrosome. It is found in the spindle. Its function is as follows. Required for gamma-tubulin complex recruitment to the centrosome. This is Mitotic-spindle organizing protein 1 (mzt1) from Danio rerio (Zebrafish).